The sequence spans 147 residues: Cilia- and flagella-associated protein 90 (147 aa).

The segment at 1–36 (MEDDEEETTASTLRGKPRPPPVSAQSAFSYIPPRRL) is disordered.

Microtubule inner protein component of sperm flagellar doublet microtubules.

The protein localises to the cytoplasm. It is found in the cytoskeleton. The protein resides in the cilium axoneme. Its subcellular location is the flagellum axoneme. Functionally, microtubule inner protein (MIP) part of the dynein-decorated doublet microtubules (DMTs) in cilia axoneme, which is required for motile cilia beating. The chain is Cilia- and flagella-associated protein 90 from Homo sapiens (Human).